The following is a 251-amino-acid chain: Putative F-box protein PP2-B12 (251 aa).

Residues 1 to 46 enclose the F-box domain; it reads MNFLDLPEECIATMISFTSPFDACRISAVSKLLRSAADSNTTWERF.

The sequence is that of Putative F-box protein PP2-B12 (PP2B12) from Arabidopsis thaliana (Mouse-ear cress).